Consider the following 324-residue polypeptide: Reaction center protein M chain (324 aa).

Over 2-51 (ADYQTIYTQIQARGPHITVSGEWGDNDRVGKPFYSYWLGKIGDAQIGPIY) the chain is Cytoplasmic. The helical transmembrane segment at 52 to 76 (LGASGIAAFAFGSTAILIILFNMAA) threads the bilayer. Over 77-110 (EVHFDPLQFFRQFFWLGLYPPKAQYGMGIPPLHD) the chain is Periplasmic. The chain crosses the membrane as a helical span at residues 111 to 137 (GGWWLMAGLFMTLSLGSWWIRVYSRAR). The Cytoplasmic segment spans residues 138 to 142 (ALGLG). A helical transmembrane segment spans residues 143-166 (THIAWNFAAAIFFVLCIGCIHPTL). Residues 167–197 (VGSWSEGVPFGIWPHIDWLTAFSIRYGNFYY) lie on the Periplasmic side of the membrane. 2 residues coordinate (7R,8Z)-bacteriochlorophyll b: His-181 and His-201. A helical transmembrane segment spans residues 198–223 (CPWHGFSIGFAYGCGLLFAAHGATIL). Fe cation is bound by residues His-218 and Glu-233. Topologically, residues 224–259 (AVARFGGDREIEQITDRGTAVERAALFWRWTIGFNA) are cytoplasmic. Position 251 (Trp-251) interacts with a ubiquinone. Residues 260–284 (TIESVHRWGWFFSLMVMVSASVGIL) form a helical membrane-spanning segment. His-265 provides a ligand contact to Fe cation. At 285 to 324 (LTGTFVDNWYLWCVKHGAAPDYPAYLPATPDPASLPGAPK) the chain is on the periplasmic side.

Belongs to the reaction center PufL/M/PsbA/D family. In terms of assembly, reaction center is composed of four bacteriochlorophylls, two bacteriopheophytins, two ubiquinones, one iron, and three highly hydrophobic polypeptide chains (designated L, M, and H).

The protein resides in the cellular chromatophore membrane. In terms of biological role, the reaction center is a membrane-bound complex that mediates the initial photochemical event in the electron transfer process of photosynthesis. The chain is Reaction center protein M chain (pufM) from Blastochloris viridis (Rhodopseudomonas viridis).